Consider the following 187-residue polypeptide: Elongation factor P (187 aa).

It belongs to the elongation factor P family.

It localises to the cytoplasm. The protein operates within protein biosynthesis; polypeptide chain elongation. In terms of biological role, involved in peptide bond synthesis. Stimulates efficient translation and peptide-bond synthesis on native or reconstituted 70S ribosomes in vitro. Probably functions indirectly by altering the affinity of the ribosome for aminoacyl-tRNA, thus increasing their reactivity as acceptors for peptidyl transferase. The protein is Elongation factor P of Synechococcus sp. (strain CC9605).